We begin with the raw amino-acid sequence, 441 residues long: Zinc finger protein ZIC 3 (441 aa).

Residues 222–257 (LSCKWLEESPMNRPQKTCDRTFSSMHELVTHMTMEH) form a C2H2-type 1; atypical zinc finger. Residues 266-293 (HICYWEECPRGGKSFKAKYKLVNHIRVH) form a C2H2-type 2; atypical zinc finger. 3 consecutive C2H2-type zinc fingers follow at residues 299-323 (FPCPFPGCGKIFARSENLKIHKRTH), 329-353 (FKCEFEGCDRRFANSSDRKKHMHVH), and 359-381 (YICKVCDKSYTHPSSLRKHMKVH). The segment at 375–441 (RKHMKVHESQ…LPPNFNEWYV (67 aa)) is disordered. Over residues 383–399 (SQGSDSSPAASSGYESA) the composition is skewed to low complexity. The segment covering 406-429 (SANSEEPSKNSSATHQTNNSSHNT) has biased composition (polar residues).

It belongs to the GLI C2H2-type zinc-finger protein family.

The protein localises to the nucleus. The protein resides in the cytoplasm. Functionally, probably acts as a transcriptional activator. May bind to the minimal GLI-consensus sequence 5'-GGGTGGTC-3'. Can determine the ectodermal cell fate and promote the earliest step of neural and neural crest development. Involved in establishing left-right asymmetry in the embryo. The chain is Zinc finger protein ZIC 3 (zic3) from Xenopus tropicalis (Western clawed frog).